The primary structure comprises 52 residues: ATP synthase F(0) complex subunit 8 (52 aa).

Residues 10-30 (LMTHLWAWLMLYLTTQKIKTF) traverse the membrane as a helical segment.

The protein belongs to the ATPase protein 8 family. Component of the ATP synthase complex composed at least of ATP5F1A/subunit alpha, ATP5F1B/subunit beta, ATP5MC1/subunit c (homooctomer), MT-ATP6/subunit a, MT-ATP8/subunit 8, ATP5ME/subunit e, ATP5MF/subunit f, ATP5MG/subunit g, ATP5MK/subunit k, ATP5MJ/subunit j, ATP5F1C/subunit gamma, ATP5F1D/subunit delta, ATP5F1E/subunit epsilon, ATP5PF/subunit F6, ATP5PB/subunit b, ATP5PD/subunit d, ATP5PO/subunit OSCP. ATP synthase complex consists of a soluble F(1) head domain (subunits alpha(3) and beta(3)) - the catalytic core - and a membrane F(0) domain - the membrane proton channel (subunits c, a, 8, e, f, g, k and j). These two domains are linked by a central stalk (subunits gamma, delta, and epsilon) rotating inside the F1 region and a stationary peripheral stalk (subunits F6, b, d, and OSCP).

The protein resides in the mitochondrion membrane. Functionally, subunit 8, of the mitochondrial membrane ATP synthase complex (F(1)F(0) ATP synthase or Complex V) that produces ATP from ADP in the presence of a proton gradient across the membrane which is generated by electron transport complexes of the respiratory chain. ATP synthase complex consist of a soluble F(1) head domain - the catalytic core - and a membrane F(1) domain - the membrane proton channel. These two domains are linked by a central stalk rotating inside the F(1) region and a stationary peripheral stalk. During catalysis, ATP synthesis in the catalytic domain of F(1) is coupled via a rotary mechanism of the central stalk subunits to proton translocation. In vivo, can only synthesize ATP although its ATP hydrolase activity can be activated artificially in vitro. Part of the complex F(0) domain. This chain is ATP synthase F(0) complex subunit 8, found in Lycodon semicarinatus (Ryukyu odd-tooth snake).